Here is a 430-residue protein sequence, read N- to C-terminus: Phosphomethylpyrimidine synthase 2 (430 aa).

Substrate is bound by residues Asn66, Met95, Tyr124, His164, Ser186–Gly188, Asp227–Arg230, and Glu266. His270 contacts Zn(2+). Tyr293 provides a ligand contact to substrate. Position 334 (His334) interacts with Zn(2+). Cys411, Cys414, and Cys418 together coordinate [4Fe-4S] cluster.

The protein belongs to the ThiC family. Homodimer. The cofactor is [4Fe-4S] cluster.

It carries out the reaction 5-amino-1-(5-phospho-beta-D-ribosyl)imidazole + S-adenosyl-L-methionine = 4-amino-2-methyl-5-(phosphooxymethyl)pyrimidine + CO + 5'-deoxyadenosine + formate + L-methionine + 3 H(+). The protein operates within cofactor biosynthesis; thiamine diphosphate biosynthesis. In terms of biological role, catalyzes the synthesis of the hydroxymethylpyrimidine phosphate (HMP-P) moiety of thiamine from aminoimidazole ribotide (AIR) in a radical S-adenosyl-L-methionine (SAM)-dependent reaction. This Syntrophotalea carbinolica (strain DSM 2380 / NBRC 103641 / GraBd1) (Pelobacter carbinolicus) protein is Phosphomethylpyrimidine synthase 2.